The primary structure comprises 202 residues: IMP cyclohydrolase (202 aa).

A disordered region spans residues 29–52 (VQRDGTVTVEPTPDAPETDNPYIS).

This sequence belongs to the archaeal IMP cyclohydrolase family.

The enzyme catalyses IMP + H2O = 5-formamido-1-(5-phospho-D-ribosyl)imidazole-4-carboxamide. Its pathway is purine metabolism; IMP biosynthesis via de novo pathway; IMP from 5-formamido-1-(5-phospho-D-ribosyl)imidazole-4-carboxamide: step 1/1. Its function is as follows. Catalyzes the cyclization of 5-formylamidoimidazole-4-carboxamide ribonucleotide to IMP. The protein is IMP cyclohydrolase of Haloarcula marismortui (strain ATCC 43049 / DSM 3752 / JCM 8966 / VKM B-1809) (Halobacterium marismortui).